The sequence spans 386 residues: MKIHEYQGKELLKQFGVPVPRGIPAFSVDEAVAAAEKLGGPVWVVKAQIHAGGRGKGGGVKLARSLDDVRKLASEILGMQLVTHQTGPEGQKVNRLYIEDGADIQKEYYVSLVTDRATQKVAIIASSEGGMDIEEVAHSTPEKIITEYIDPLTGLQAEQAKKVAESIGLSGGSADQAADVFQKLYTCYMDTDASLVEINPLNCDSKGNIIALDAKFNFDSNALFRHPEIVAYRDLDEEDPAEIEASKFDLAYIQLDGNIGCLVNGAGLAMATMDTIKLFGGEPANFLDVGGGATAEKVTEAFKIMLKNKGVKAILVNIFGGIMRCDVIAEGVITACKAVNLNVPLVVRMKGTNEELGKKMLADSGLPIISADTMAEAATRVVAAVK.

Positions 9-244 (KELLKQFGVP…LDEEDPAEIE (236 aa)) constitute an ATP-grasp domain. ATP-binding positions include Lys-46, 53–55 (GRG), Glu-99, Ala-102, and Glu-107. Positions 199 and 213 each coordinate Mg(2+). Substrate-binding positions include Asn-264 and 321–323 (GIM).

It belongs to the succinate/malate CoA ligase beta subunit family. In terms of assembly, heterotetramer of two alpha and two beta subunits. Mg(2+) serves as cofactor.

The enzyme catalyses succinate + ATP + CoA = succinyl-CoA + ADP + phosphate. The catalysed reaction is GTP + succinate + CoA = succinyl-CoA + GDP + phosphate. Its pathway is carbohydrate metabolism; tricarboxylic acid cycle; succinate from succinyl-CoA (ligase route): step 1/1. Succinyl-CoA synthetase functions in the citric acid cycle (TCA), coupling the hydrolysis of succinyl-CoA to the synthesis of either ATP or GTP and thus represents the only step of substrate-level phosphorylation in the TCA. The beta subunit provides nucleotide specificity of the enzyme and binds the substrate succinate, while the binding sites for coenzyme A and phosphate are found in the alpha subunit. The protein is Succinate--CoA ligase [ADP-forming] subunit beta of Bordetella petrii (strain ATCC BAA-461 / DSM 12804 / CCUG 43448).